The primary structure comprises 97 residues: Large ribosomal subunit protein bL27 (97 aa).

The propeptide occupies Met-1–Phe-12. A disordered region spans residues Ala-13–Ala-37.

The protein belongs to the bacterial ribosomal protein bL27 family. In terms of processing, the N-terminus is cleaved by ribosomal processing cysteine protease Prp.

This is Large ribosomal subunit protein bL27 from Streptococcus pneumoniae serotype 2 (strain D39 / NCTC 7466).